We begin with the raw amino-acid sequence, 452 residues long: COBRA-like protein 1 (452 aa).

The signal sequence occupies residues 1 to 33 (MGFFLCSSSSIFFKFGISIIFLVSFSGLTPSEA). Asn42, Asn167, Asn175, Asn214, Asn239, Asn254, Asn323, Asn338, and Asn357 each carry an N-linked (GlcNAc...) asparagine glycan. Ser432 carries the GPI-anchor amidated serine lipid modification. The propeptide at 433-452 (VGSLFAAMALLLIVFLHGNL) is removed in mature form.

This sequence belongs to the COBRA family. Expressed in roots, stems, leaves, flowers and siliques.

The protein resides in the cell membrane. This chain is COBRA-like protein 1 (COBL1), found in Arabidopsis thaliana (Mouse-ear cress).